The following is a 571-amino-acid chain: Proline--tRNA ligase (571 aa).

It belongs to the class-II aminoacyl-tRNA synthetase family. ProS type 1 subfamily. As to quaternary structure, homodimer.

The protein resides in the cytoplasm. It carries out the reaction tRNA(Pro) + L-proline + ATP = L-prolyl-tRNA(Pro) + AMP + diphosphate. Catalyzes the attachment of proline to tRNA(Pro) in a two-step reaction: proline is first activated by ATP to form Pro-AMP and then transferred to the acceptor end of tRNA(Pro). As ProRS can inadvertently accommodate and process non-cognate amino acids such as alanine and cysteine, to avoid such errors it has two additional distinct editing activities against alanine. One activity is designated as 'pretransfer' editing and involves the tRNA(Pro)-independent hydrolysis of activated Ala-AMP. The other activity is designated 'posttransfer' editing and involves deacylation of mischarged Ala-tRNA(Pro). The misacylated Cys-tRNA(Pro) is not edited by ProRS. This is Proline--tRNA ligase from Pseudomonas entomophila (strain L48).